Reading from the N-terminus, the 598-residue chain is IQ calmodulin-binding motif-containing protein 1 (598 aa).

The tract at residues 1 to 157 (MKPTGTDPRI…SLFWLLGGHV (157 aa)) is interaction with BBS1, BBS8 and BBS9. Residues 287–598 (QEVEEQKLHQ…NLFIGGTKPP (312 aa)) are interaction with CEP290, BBS1, BBS2, BBS4, BBS5, BBS7, BBS8 and BBS9. IQ domains lie at 294–317 (LHQA…LKKL), 318–338 (PSAV…MLLE), 387–416 (EEKS…SLIE), and 417–437 (YKAA…CRKK). Residues 336-373 (LLEINRQKEEEDLKLQLQLQRQRAMRLSRELQLSMLEI) adopt a coiled-coil conformation. Residues 530–598 (AEGKEPELFL…NLFIGGTKPP (69 aa)) are interaction with BBS1, BBS2, BBS4, BBS7, BBS8 and BBS9. A Phosphoserine modification is found at Ser572.

In terms of assembly, interacts with CEP290/NPHP6; IQCB1/NPHP5 and CEP290 are proposed to form a functional NPHP5-6 module/NPHP6; localized to the centrosome. Interacts with calmodulin, ATXN10. Interacts with NPHP1, INVS, NPHP4 and RPGRIP1L; these interactions likely require additional interactors. Associates with the BBSome complex; interacts with BBS1, BBS2, BBS4, BBS5, BBS7, BBS8 and BBS9. As to expression, ubiquitously expressed in fetal and adult tissues. Localized to the outer segments and connecting cilia of photoreceptor cells. Up-regulated in a number of primary colorectal and gastric tumors.

Its subcellular location is the cytoplasm. The protein localises to the cytoskeleton. It localises to the microtubule organizing center. It is found in the centrosome. The protein resides in the centriole. Functionally, involved in ciliogenesis. The function in an early step in cilia formation depends on its association with CEP290/NPHP6. Involved in regulation of the BBSome complex integrity, specifically for presence of BBS2 and BBS5 in the complex, and in ciliary targeting of selected BBSome cargos. May play a role in controlling entry of the BBSome complex to cilia possibly implicating CEP290/NPHP6. In Homo sapiens (Human), this protein is IQ calmodulin-binding motif-containing protein 1 (IQCB1).